The primary structure comprises 136 residues: Protein NrdI (136 aa).

This sequence belongs to the NrdI family.

In terms of biological role, probably involved in ribonucleotide reductase function. The protein is Protein NrdI of Salmonella arizonae (strain ATCC BAA-731 / CDC346-86 / RSK2980).